Here is an 844-residue protein sequence, read N- to C-terminus: DNA mismatch repair protein MutS (844 aa).

610–617 (GPNMGGKS) lines the ATP pocket.

Belongs to the DNA mismatch repair MutS family.

Its function is as follows. This protein is involved in the repair of mismatches in DNA. It is possible that it carries out the mismatch recognition step. This protein has a weak ATPase activity. This is DNA mismatch repair protein MutS from Francisella tularensis subsp. holarctica (strain FTNF002-00 / FTA).